Here is a 305-residue protein sequence, read N- to C-terminus: MTAVLPLPQPLADPAPRDPRQRLQREQLRLGKRLQRQVGQAIADFGMIAPGDKVMVCLSGGKDSYTLLDMLLQLQRKAPVPFSLVAVNLDQKQPDFPAHVLPAYLRGLGVPFDIVEQDTYSVVSRVIPAGKTMCSLCSRLRRGALYAYAQTHGVTKIALGHHRDDIVATFFMNLFHHARLAAMAPKLRSDDGAHVVIRPLAYVREADIAAYAQARQFPIIPCNLCGSQENLQRQQVGKLLQQWDREFPGRVEQIARALGDVRPEQLADRTLFDFLALGRSGDAPSDVDPDPSAWLSASHAPHDSD.

The interval 1–20 (MTAVLPLPQPLADPAPRDPR) is disordered. A PP-loop motif motif is present at residues 59–64 (SGGKDS). Positions 134, 137, and 225 each coordinate [4Fe-4S] cluster. Positions 282 to 293 (DAPSDVDPDPSA) are enriched in low complexity. A disordered region spans residues 282 to 305 (DAPSDVDPDPSAWLSASHAPHDSD).

The protein belongs to the TtcA family. As to quaternary structure, homodimer. Requires Mg(2+) as cofactor. The cofactor is [4Fe-4S] cluster.

It is found in the cytoplasm. It carries out the reaction cytidine(32) in tRNA + S-sulfanyl-L-cysteinyl-[cysteine desulfurase] + AH2 + ATP = 2-thiocytidine(32) in tRNA + L-cysteinyl-[cysteine desulfurase] + A + AMP + diphosphate + H(+). It functions in the pathway tRNA modification. Its function is as follows. Catalyzes the ATP-dependent 2-thiolation of cytidine in position 32 of tRNA, to form 2-thiocytidine (s(2)C32). The sulfur atoms are provided by the cysteine/cysteine desulfurase (IscS) system. The protein is tRNA-cytidine(32) 2-sulfurtransferase of Xanthomonas euvesicatoria pv. vesicatoria (strain 85-10) (Xanthomonas campestris pv. vesicatoria).